Reading from the N-terminus, the 335-residue chain is Beta-ketoacyl-[acyl-carrier-protein] synthase III (335 aa).

Active-site residues include C119 and H261. The ACP-binding stretch occupies residues Q262–R266. Residue N291 is part of the active site.

This sequence belongs to the thiolase-like superfamily. FabH family. In terms of assembly, homodimer.

The protein localises to the cytoplasm. The catalysed reaction is malonyl-[ACP] + acetyl-CoA + H(+) = 3-oxobutanoyl-[ACP] + CO2 + CoA. Its pathway is lipid metabolism; fatty acid biosynthesis. In terms of biological role, catalyzes the condensation reaction of fatty acid synthesis by the addition to an acyl acceptor of two carbons from malonyl-ACP. Catalyzes the first condensation reaction which initiates fatty acid synthesis and may therefore play a role in governing the total rate of fatty acid production. Possesses both acetoacetyl-ACP synthase and acetyl transacylase activities. Its substrate specificity determines the biosynthesis of branched-chain and/or straight-chain of fatty acids. The sequence is that of Beta-ketoacyl-[acyl-carrier-protein] synthase III from Prochlorococcus marinus (strain MIT 9312).